Reading from the N-terminus, the 68-residue chain is Cx9C motif-containing protein 4 (68 aa).

In terms of domain architecture, CHCH spans 4–46; sequence KDPCQKQACEIQKCLQANSYMESKCQAVIQELRKCCAQYPKGR. 2 consecutive short sequence motifs (cx9C motif) follow at residues 7–17 and 28–38; these read CQKQACEIQKC and CQAVIQELRKC. 3 disulfides stabilise this stretch: cysteine 7–cysteine 38, cysteine 17–cysteine 28, and cysteine 39–cysteine 50.

The protein belongs to the CMC4 family. As to expression, expressed in many tissues with a relatively high level in skeletal muscle.

It is found in the mitochondrion. This chain is Cx9C motif-containing protein 4 (CMC4), found in Homo sapiens (Human).